A 9904-amino-acid chain; its full sequence is Extracellular matrix-binding protein ebh (9904 aa).

Residues 1-39 (MNYRDKIQKFSIRKYTVGTFSTVIATLVFLGFNTSQAHA) form the signal peptide. Residues 41–59 (ETNQPASVVKQKQQSNNEQ) are compositionally biased toward polar residues. Disordered regions lie at residues 41–153 (ETNQ…NDNR) and 250–277 (PQRQQTSRRSNRIQTRSVESRAAEPRSV). Residues 65–78 (SQVQNSQNSQNSQS) show a composition bias toward low complexity. Residues 79–117 (LSATHENEQPNISQANLVDQKVAQSSTTNDEQPASQNVN) are compositionally biased toward polar residues. Residues 130–140 (PDKEEGKHKQN) show a composition bias toward basic and acidic residues. Composition is skewed to polar residues over residues 141–151 (ESQSANKNGND) and 250–266 (PQRQQTSRRSNRIQTRS). FIVAR domains are found at residues 2524–2580 (AKNH…VSDA), 2610–2666 (SKNN…ISEE), 2687–2750 (DTHT…VQTA), 2780–2836 (AKTK…IAEE), 2864–2919 (AKTQ…IRQN), 2947–3002 (AKNQ…INTN), 3030–3085 (AKTQ…INDK), 3154–3212 (AMTK…VNQK), 3280–3339 (AMTG…VNNA), 3407–3465 (AMGN…VNRA), 3533–3591 (AMGN…VTEA), 3659–3717 (AMNT…ITQK), 3785–3843 (AMAS…VEAA), 3911–3969 (AMGN…VEQA), 4037–4095 (AMGT…VTAA), 4160–4208 (DKDA…VDNA), 4276–4334 (AMGA…INGM), 4402–4460 (AMTA…VNSA), 4528–4586 (AMKG…ITQA), 4654–4712 (AMHS…VEQA), 4780–4838 (AMGQ…VERA), 4906–4964 (AMTA…VTNA), 5032–5090 (AMKG…INQA), 5158–5216 (AMTN…VESA), 5284–5342 (AMSN…VEQA), 5410–5468 (AMNQ…INQK), 5536–5593 (AMGN…VQAA), 5661–5719 (AMGQ…VEAA), 5787–5845 (AMQR…VEQA), 5913–5971 (AMDQ…VTAA), 6039–6097 (AMNQ…VTQA), 6175–6223 (DKDQ…VEAA), 6291–6349 (AMGN…VEAA), 6417–6475 (AMDK…INQA), 6543–6601 (AMGN…VEQA), 6669–6727 (AMTQ…ITAA), 6795–6853 (AMTQ…IQQA), 6921–6979 (AMTN…VEQA), 7047–7105 (AMTQ…VAQA), 7173–7231 (AMGT…VTQA), 7299–7357 (AMGN…ITRA), 7425–7486 (AMDQ…ITNE), 7551–7609 (AMEL…VNGA), 7677–7735 (AMGN…VEQA), 7803–7860 (AMHG…INQA), 7928–7986 (LMDA…VSSA), 8054–8112 (AIKA…IDQA), 8180–8238 (AMEA…VEQL), 8306–8364 (AMQA…VEQL), 8432–8490 (AMET…VEQA), 8558–8612 (SMDQ…VDQA), 8680–8739 (AMDQ…VIKL), and 8934–8990 (AMET…INGA). Residues 9710-9730 (IKNAIGVVGISGLLASFWFFI) form a helical membrane-spanning segment. A disordered region spans residues 9807–9904 (RRKEDEEDVE…KKKKSKKNKK (98 aa)). 2 stretches are compositionally biased toward basic and acidic residues: residues 9822–9832 (TDEKVLKDNEH) and 9871–9881 (QKDNQSKDKKS). Over residues 9886 to 9904 (TSKKVAAKKKKKKSKKNKK) the composition is skewed to basic residues.

The protein resides in the cell membrane. This Staphylococcus aureus (strain MW2) protein is Extracellular matrix-binding protein ebh (ebh).